A 280-amino-acid chain; its full sequence is Cobalt import ATP-binding protein CbiO (280 aa).

The ABC transporter domain occupies 2 to 236; it reads IEVRDLRFHY…GDWLRQQGLG (235 aa). Residue 36–43 coordinates ATP; sequence GANGCGKT.

The protein belongs to the ABC transporter superfamily. Cobalt importer (TC 3.A.1.18.1) family. In terms of assembly, forms an energy-coupling factor (ECF) transporter complex composed of an ATP-binding protein (A component, CbiO), a transmembrane protein (T component, CbiQ) and 2 possible substrate-capture proteins (S components, CbiM and CbiN) of unknown stoichimetry.

It is found in the cell inner membrane. It functions in the pathway cofactor biosynthesis; adenosylcobalamin biosynthesis. Its function is as follows. Part of the energy-coupling factor (ECF) transporter complex CbiMNOQ involved in cobalt import. Presumably responsible for energy coupling to the transport system. This is Cobalt import ATP-binding protein CbiO from Syntrophus aciditrophicus (strain SB).